The following is a 160-amino-acid chain: Serine-protein kinase RsbW (160 aa).

Belongs to the anti-sigma-factor family.

It catalyses the reaction L-seryl-[protein] + ATP = O-phospho-L-seryl-[protein] + ADP + H(+). The catalysed reaction is L-threonyl-[protein] + ATP = O-phospho-L-threonyl-[protein] + ADP + H(+). Its function is as follows. Negative regulator of sigma-B activity. Phosphorylates and inactivates its specific antagonist protein, RsbV. Upon phosphorylation of RsbV, RsbW is released and binds to sigma-B, thereby blocking its ability to form an RNA polymerase holoenzyme (E-sigma-B). The protein is Serine-protein kinase RsbW of Bacillus cereus (strain Q1).